The following is a 249-amino-acid chain: Homeobox protein TGIF2LX (249 aa).

Residues 1-27 show a composition bias toward basic and acidic residues; sequence MEAAADRPAETRSRVEKDSRRAKKDSP. 2 disordered regions span residues 1-60 and 121-215; these read MEAA…KKKR and QRRG…EPVS. Residues 28–46 are compositionally biased toward polar residues; the sequence is AKTQSPAQDTSIMLRSNAD. The homeobox; TALE-type DNA-binding region spans 55–118; it reads EHKKKRKGYL…INARRRILPD (64 aa). Positions 159 to 172 are enriched in polar residues; the sequence is DNVQSLPLRSSPKG. Over residues 202–215 the composition is skewed to low complexity; the sequence is VSNITSSSSPEPVS.

This sequence belongs to the TALE/TGIF homeobox family.

It is found in the nucleus. In terms of biological role, may have a transcription role in testis. The protein is Homeobox protein TGIF2LX (TGIF2LX) of Miopithecus talapoin (Angolan talapoin).